Here is a 235-residue protein sequence, read N- to C-terminus: Large ribosomal subunit protein uL1 (235 aa).

The protein belongs to the universal ribosomal protein uL1 family. Part of the 50S ribosomal subunit.

Its function is as follows. Binds directly to 23S rRNA. The L1 stalk is quite mobile in the ribosome, and is involved in E site tRNA release. In terms of biological role, protein L1 is also a translational repressor protein, it controls the translation of the L11 operon by binding to its mRNA. This Pseudarthrobacter chlorophenolicus (strain ATCC 700700 / DSM 12829 / CIP 107037 / JCM 12360 / KCTC 9906 / NCIMB 13794 / A6) (Arthrobacter chlorophenolicus) protein is Large ribosomal subunit protein uL1.